Here is a 126-residue protein sequence, read N- to C-terminus: Allergen Tha p 1 (126 aa).

The first 18 residues, 1–18 (MKLLILALTCAAAVWARP), serve as a signal peptide directing secretion.

The protein belongs to the insect A10/OS-D protein family.

Its subcellular location is the secreted. The protein is Allergen Tha p 1 of Thaumetopoea pityocampa (Pine processionary moth).